The primary structure comprises 330 residues: Ketol-acid reductoisomerase (NADP(+)) (330 aa).

Residues L3–T184 enclose the KARI N-terminal Rossmann domain. NADP(+) contacts are provided by residues Y26–Q29, S52, and S54. H109 is a catalytic residue. G135 serves as a coordination point for NADP(+). Residues S185–K329 enclose the KARI C-terminal knotted domain. D193, E197, E229, and E233 together coordinate Mg(2+). Position 254 (S254) interacts with substrate.

The protein belongs to the ketol-acid reductoisomerase family. It depends on Mg(2+) as a cofactor.

The enzyme catalyses (2R)-2,3-dihydroxy-3-methylbutanoate + NADP(+) = (2S)-2-acetolactate + NADPH + H(+). The catalysed reaction is (2R,3R)-2,3-dihydroxy-3-methylpentanoate + NADP(+) = (S)-2-ethyl-2-hydroxy-3-oxobutanoate + NADPH + H(+). Its pathway is amino-acid biosynthesis; L-isoleucine biosynthesis; L-isoleucine from 2-oxobutanoate: step 2/4. The protein operates within amino-acid biosynthesis; L-valine biosynthesis; L-valine from pyruvate: step 2/4. Involved in the biosynthesis of branched-chain amino acids (BCAA). Catalyzes an alkyl-migration followed by a ketol-acid reduction of (S)-2-acetolactate (S2AL) to yield (R)-2,3-dihydroxy-isovalerate. In the isomerase reaction, S2AL is rearranged via a Mg-dependent methyl migration to produce 3-hydroxy-3-methyl-2-ketobutyrate (HMKB). In the reductase reaction, this 2-ketoacid undergoes a metal-dependent reduction by NADPH to yield (R)-2,3-dihydroxy-isovalerate. This chain is Ketol-acid reductoisomerase (NADP(+)), found in Helicobacter pylori (strain Shi470).